Consider the following 381-residue polypeptide: Transaldolase 2 (381 aa).

The active-site Schiff-base intermediate with substrate is the Lys-141.

It belongs to the transaldolase family. Type 2 subfamily.

Its subcellular location is the cytoplasm. It catalyses the reaction D-sedoheptulose 7-phosphate + D-glyceraldehyde 3-phosphate = D-erythrose 4-phosphate + beta-D-fructose 6-phosphate. Its pathway is carbohydrate degradation; pentose phosphate pathway; D-glyceraldehyde 3-phosphate and beta-D-fructose 6-phosphate from D-ribose 5-phosphate and D-xylulose 5-phosphate (non-oxidative stage): step 2/3. Its function is as follows. Transaldolase is important for the balance of metabolites in the pentose-phosphate pathway. This is Transaldolase 2 (tal2) from Nostoc sp. (strain PCC 7120 / SAG 25.82 / UTEX 2576).